Consider the following 359-residue polypeptide: Protein RecA (359 aa).

77–84 (GPESSGKT) contacts ATP.

The protein belongs to the RecA family.

It localises to the cytoplasm. Can catalyze the hydrolysis of ATP in the presence of single-stranded DNA, the ATP-dependent uptake of single-stranded DNA by duplex DNA, and the ATP-dependent hybridization of homologous single-stranded DNAs. It interacts with LexA causing its activation and leading to its autocatalytic cleavage. The polypeptide is Protein RecA (Azospirillum lipoferum (strain 4B)).